Reading from the N-terminus, the 35-residue chain is Photosystem II reaction center protein T (35 aa).

A helical transmembrane segment spans residues 3–23; sequence ALVYTFLLVSTLGIIFFAIFF.

The protein belongs to the PsbT family. PSII is composed of 1 copy each of membrane proteins PsbA, PsbB, PsbC, PsbD, PsbE, PsbF, PsbH, PsbI, PsbJ, PsbK, PsbL, PsbM, PsbT, PsbY, PsbZ, Psb30/Ycf12, at least 3 peripheral proteins of the oxygen-evolving complex and a large number of cofactors. It forms dimeric complexes.

It is found in the plastid. Its subcellular location is the chloroplast thylakoid membrane. In terms of biological role, found at the monomer-monomer interface of the photosystem II (PS II) dimer, plays a role in assembly and dimerization of PSII. PSII is a light-driven water plastoquinone oxidoreductase, using light energy to abstract electrons from H(2)O, generating a proton gradient subsequently used for ATP formation. The polypeptide is Photosystem II reaction center protein T (Oenothera argillicola (Appalachian evening primrose)).